Reading from the N-terminus, the 297-residue chain is N-acetylmuramic acid 6-phosphate etherase (297 aa).

The SIS domain maps to 55 to 218 (ITKHFKQGGR…STGAMVGIGK (164 aa)). Catalysis depends on E83, which acts as the Proton donor. E114 is a catalytic residue.

This sequence belongs to the GCKR-like family. MurNAc-6-P etherase subfamily. In terms of assembly, homodimer.

It carries out the reaction N-acetyl-D-muramate 6-phosphate + H2O = N-acetyl-D-glucosamine 6-phosphate + (R)-lactate. It participates in amino-sugar metabolism; N-acetylmuramate degradation. Its function is as follows. Specifically catalyzes the cleavage of the D-lactyl ether substituent of MurNAc 6-phosphate, producing GlcNAc 6-phosphate and D-lactate. The sequence is that of N-acetylmuramic acid 6-phosphate etherase from Oenococcus oeni (strain ATCC BAA-331 / PSU-1).